The primary structure comprises 574 residues: Proline--tRNA ligase (574 aa).

The protein belongs to the class-II aminoacyl-tRNA synthetase family. ProS type 1 subfamily. Homodimer.

It is found in the cytoplasm. The catalysed reaction is tRNA(Pro) + L-proline + ATP = L-prolyl-tRNA(Pro) + AMP + diphosphate. Its function is as follows. Catalyzes the attachment of proline to tRNA(Pro) in a two-step reaction: proline is first activated by ATP to form Pro-AMP and then transferred to the acceptor end of tRNA(Pro). As ProRS can inadvertently accommodate and process non-cognate amino acids such as alanine and cysteine, to avoid such errors it has two additional distinct editing activities against alanine. One activity is designated as 'pretransfer' editing and involves the tRNA(Pro)-independent hydrolysis of activated Ala-AMP. The other activity is designated 'posttransfer' editing and involves deacylation of mischarged Ala-tRNA(Pro). The misacylated Cys-tRNA(Pro) is not edited by ProRS. The polypeptide is Proline--tRNA ligase (Ralstonia pickettii (strain 12J)).